Here is a 222-residue protein sequence, read N- to C-terminus: MKEVRIEAGWKKVLQEEFDKFYFEKLTDFVREEYRQSPIYPPARFIFRAFDTCPFDRVKVVILGQDPYHEPGQAEGLAFSVPTGIPIPPSLRNICEEIRTDTGQPAHIDGGSLLPWVEQGVLLLNATLTVRASQAGSHQGHGWETFTDAAIEALAKRREHLVFLLWGSYARRKSAMIDPRCHLILEAPHPSPLSAHRGFFGCKHFSRTNAYLRQHGIAPIVW.

Catalysis depends on D66, which acts as the Proton acceptor.

Belongs to the uracil-DNA glycosylase (UDG) superfamily. UNG family.

It is found in the cytoplasm. The enzyme catalyses Hydrolyzes single-stranded DNA or mismatched double-stranded DNA and polynucleotides, releasing free uracil.. Functionally, excises uracil residues from the DNA which can arise as a result of misincorporation of dUMP residues by DNA polymerase or due to deamination of cytosine. This Porphyromonas gingivalis (strain ATCC BAA-308 / W83) protein is Uracil-DNA glycosylase.